The primary structure comprises 466 residues: Siroheme synthase (466 aa).

The interval 1–203 (MNYLPIFIDI…GKIQEAKADL (203 aa)) is precorrin-2 dehydrogenase /sirohydrochlorin ferrochelatase. Residues 22-23 (SI) and 43-44 (KS) contribute to the NAD(+) site. At Ser-128 the chain carries Phosphoserine. The tract at residues 216–466 (GAVYLVGGGP…FDAKPISSKK (251 aa)) is uroporphyrinogen-III C-methyltransferase. Pro-225 is a binding site for S-adenosyl-L-methionine. Asp-248 acts as the Proton acceptor in catalysis. Lys-270 (proton donor) is an active-site residue. Residues 301-303 (GGD), Ile-306, 331-332 (TA), Met-383, and Gly-412 contribute to the S-adenosyl-L-methionine site.

The protein in the N-terminal section; belongs to the precorrin-2 dehydrogenase / sirohydrochlorin ferrochelatase family. In the C-terminal section; belongs to the precorrin methyltransferase family.

It catalyses the reaction uroporphyrinogen III + 2 S-adenosyl-L-methionine = precorrin-2 + 2 S-adenosyl-L-homocysteine + H(+). The catalysed reaction is precorrin-2 + NAD(+) = sirohydrochlorin + NADH + 2 H(+). It carries out the reaction siroheme + 2 H(+) = sirohydrochlorin + Fe(2+). Its pathway is cofactor biosynthesis; adenosylcobalamin biosynthesis; precorrin-2 from uroporphyrinogen III: step 1/1. It functions in the pathway cofactor biosynthesis; adenosylcobalamin biosynthesis; sirohydrochlorin from precorrin-2: step 1/1. The protein operates within porphyrin-containing compound metabolism; siroheme biosynthesis; precorrin-2 from uroporphyrinogen III: step 1/1. It participates in porphyrin-containing compound metabolism; siroheme biosynthesis; siroheme from sirohydrochlorin: step 1/1. Its pathway is porphyrin-containing compound metabolism; siroheme biosynthesis; sirohydrochlorin from precorrin-2: step 1/1. Its function is as follows. Multifunctional enzyme that catalyzes the SAM-dependent methylations of uroporphyrinogen III at position C-2 and C-7 to form precorrin-2 via precorrin-1. Then it catalyzes the NAD-dependent ring dehydrogenation of precorrin-2 to yield sirohydrochlorin. Finally, it catalyzes the ferrochelation of sirohydrochlorin to yield siroheme. This Vesicomyosocius okutanii subsp. Calyptogena okutanii (strain HA) protein is Siroheme synthase.